Consider the following 258-residue polypeptide: UDP-2,3-diacylglucosamine hydrolase (258 aa).

D15, H17, D48, N88, and H123 together coordinate Mn(2+). A substrate-binding site is contributed by 88–89; it reads NR. Substrate-binding residues include D131, S169, N173, K176, and H204. H204 and H206 together coordinate Mn(2+).

The protein belongs to the LpxH family. Mn(2+) is required as a cofactor.

The protein resides in the cell inner membrane. The catalysed reaction is UDP-2-N,3-O-bis[(3R)-3-hydroxytetradecanoyl]-alpha-D-glucosamine + H2O = 2-N,3-O-bis[(3R)-3-hydroxytetradecanoyl]-alpha-D-glucosaminyl 1-phosphate + UMP + 2 H(+). Its pathway is glycolipid biosynthesis; lipid IV(A) biosynthesis; lipid IV(A) from (3R)-3-hydroxytetradecanoyl-[acyl-carrier-protein] and UDP-N-acetyl-alpha-D-glucosamine: step 4/6. In terms of biological role, hydrolyzes the pyrophosphate bond of UDP-2,3-diacylglucosamine to yield 2,3-diacylglucosamine 1-phosphate (lipid X) and UMP by catalyzing the attack of water at the alpha-P atom. Involved in the biosynthesis of lipid A, a phosphorylated glycolipid that anchors the lipopolysaccharide to the outer membrane of the cell. The chain is UDP-2,3-diacylglucosamine hydrolase from Bordetella pertussis (strain Tohama I / ATCC BAA-589 / NCTC 13251).